We begin with the raw amino-acid sequence, 261 residues long: High-affinity zinc uptake system membrane protein ZnuB (261 aa).

The Periplasmic portion of the chain corresponds to 1 to 7 (MIELLFP). A helical transmembrane segment spans residues 8-28 (GWLAGIMLACAAGPLGSFVVW). Residues 29–53 (RRMSYFGDTLAHASLLGVAFGLLLD) are Cytoplasmic-facing. A helical membrane pass occupies residues 54 to 74 (VNPFYAVIAVTLLLAGGLVWL). The Periplasmic segment spans residues 75 to 83 (EKRPQLAID). A helical membrane pass occupies residues 84 to 104 (TLLGIMAHSALSLGLVVVSLM). The Cytoplasmic segment spans residues 105–121 (SNIRVDLMAYLFGDLLA). A helical membrane pass occupies residues 122–142 (VTPEDLISIAIGVVIVVAILF). Residues 143–177 (WQWRNLLSMTISPDLAFVDGVKLQRVKLLLMLVTA) lie on the Periplasmic side of the membrane. Residues 178 to 198 (LTIGVAMKFVGALIITSLLII) traverse the membrane as a helical segment. The Cytoplasmic segment spans residues 199–213 (PAATARRFARTPEQM). A helical membrane pass occupies residues 214–234 (AGVAVLVGMVAVTGGLTFSAV). A topological domain (periplasmic) is located at residue Tyr235. The chain crosses the membrane as a helical span at residues 236 to 256 (DTPAGPSVVLCAALLFILSMM). Residues 257–261 (KKQAS) lie on the Cytoplasmic side of the membrane.

Belongs to the ABC-3 integral membrane protein family.

The protein localises to the cell inner membrane. Its function is as follows. Involved in the high-affinity zinc uptake transport system. The protein is High-affinity zinc uptake system membrane protein ZnuB (znuB) of Escherichia coli (strain K12).